The chain runs to 576 residues: Adenine deaminase (576 aa).

Belongs to the metallo-dependent hydrolases superfamily. Adenine deaminase family. Mn(2+) is required as a cofactor.

It catalyses the reaction adenine + H2O + H(+) = hypoxanthine + NH4(+). This Syntrophobacter fumaroxidans (strain DSM 10017 / MPOB) protein is Adenine deaminase.